The primary structure comprises 157 residues: UPF0251 protein CLJ_B1488 (157 aa).

The protein belongs to the UPF0251 family.

The polypeptide is UPF0251 protein CLJ_B1488 (Clostridium botulinum (strain 657 / Type Ba4)).